A 106-amino-acid polypeptide reads, in one-letter code: Nucleoid-associated protein MCCL_1934 (106 aa).

Residues 1–34 (MRGGGNMQQMMKQMQKMQKKMAEEQEKLKEERIE) are disordered. Positions 7 to 16 (MQQMMKQMQK) are enriched in low complexity. Basic and acidic residues predominate over residues 20 to 34 (KMAEEQEKLKEERIE).

This sequence belongs to the YbaB/EbfC family. As to quaternary structure, homodimer.

The protein localises to the cytoplasm. It is found in the nucleoid. Functionally, binds to DNA and alters its conformation. May be involved in regulation of gene expression, nucleoid organization and DNA protection. This chain is Nucleoid-associated protein MCCL_1934, found in Macrococcus caseolyticus (strain JCSC5402) (Macrococcoides caseolyticum).